Here is a 731-residue protein sequence, read N- to C-terminus: 1,4-alpha-glucan branching enzyme GlgB (731 aa).

Catalysis depends on aspartate 408, which acts as the Nucleophile. Catalysis depends on glutamate 461, which acts as the Proton donor.

It belongs to the glycosyl hydrolase 13 family. GlgB subfamily. In terms of assembly, monomer.

The enzyme catalyses Transfers a segment of a (1-&gt;4)-alpha-D-glucan chain to a primary hydroxy group in a similar glucan chain.. Its pathway is glycan biosynthesis; glycogen biosynthesis. Functionally, catalyzes the formation of the alpha-1,6-glucosidic linkages in glycogen by scission of a 1,4-alpha-linked oligosaccharide from growing alpha-1,4-glucan chains and the subsequent attachment of the oligosaccharide to the alpha-1,6 position. The polypeptide is 1,4-alpha-glucan branching enzyme GlgB (Corynebacterium glutamicum (strain ATCC 13032 / DSM 20300 / JCM 1318 / BCRC 11384 / CCUG 27702 / LMG 3730 / NBRC 12168 / NCIMB 10025 / NRRL B-2784 / 534)).